Reading from the N-terminus, the 386-residue chain is Microtubule-binding protein TANGLED1 (386 aa).

5 disordered regions span residues 83–105 (RMRG…GVGG), 140–202 (AAGA…RVRS), 244–266 (HAST…QKRL), 303–330 (PARP…CSFS), and 345–386 (RLSL…ISSR). Positions 170–180 (RARRAREKQSH) are enriched in basic residues. Residues 181–193 (RGGAATRGADAAT) are compositionally biased toward low complexity. The segment covering 375-386 (TVRTVSSKISSR) has biased composition (polar residues).

In terms of tissue distribution, expressed in vegetative shoot tips consisting of leaf primordia and the bases of immature leaves, the shoot apical meristem, and unexpanded stem tissue. Strongly expressed in tissues enriched in dividing cells: ear primordia and embryos.

The protein resides in the cytoplasm. It is found in the cytoskeleton. The protein localises to the spindle. It localises to the phragmoplast. Its function is as follows. Is required for spatial control cell division during leaf development. Through an association with microtubules, acts both for the positioning of cytoskeletal arrays that establish planes of cell division during prophase and for spatial guidance of expanding phragmoplasts toward preestablished cortical division sites (CDS) during cytokinesis. The chain is Microtubule-binding protein TANGLED1 (TAN1) from Zea mays (Maize).